The following is a 242-amino-acid chain: Stress response regulator protein 1 (242 aa).

Residues 118-236 (NFLLVDDNFI…FDHIITCIEK (119 aa)) enclose the Response regulatory domain. Asp169 carries the 4-aspartylphosphate modification.

In terms of biological role, required for stress adaptation, morphogenesis and virulence. In Debaryomyces hansenii (strain ATCC 36239 / CBS 767 / BCRC 21394 / JCM 1990 / NBRC 0083 / IGC 2968) (Yeast), this protein is Stress response regulator protein 1 (SRR1).